Consider the following 88-residue polypeptide: Apolipoprotein C-I (88 aa).

A signal peptide spans 1–26 (MRLFLSLPVLVVVLAMVLEGPAPTQA).

The protein belongs to the apolipoprotein C1 family.

Its subcellular location is the secreted. Functionally, inhibitor of lipoprotein binding to the low density lipoprotein (LDL) receptor, LDL receptor-related protein, and very low density lipoprotein (VLDL) receptor. Associates with high density lipoproteins (HDL) and the triacylglycerol-rich lipoproteins in the plasma and makes up about 10% of the protein of the VLDL and 2% of that of HDL. Appears to interfere directly with fatty acid uptake and is also the major plasma inhibitor of cholesteryl ester transfer protein (CETP). Binds free fatty acids and reduces their intracellular esterification. Modulates the interaction of APOE with beta-migrating VLDL and inhibits binding of beta-VLDL to the LDL receptor-related protein. The chain is Apolipoprotein C-I (APOC1) from Phoca vitulina (Harbor seal).